Consider the following 155-residue polypeptide: MSRKSIAEKQVAKPDPIYRNRLVNMLVNRILKNGKKSLAYRILYKAMKNIKQKTKKNPLFVLRQAVRKVTPNVTVKARRIDGSTYQVPLEIKSTQGKALAIRWLLGASRKRSGQNMAFKLSYELIDAARDNGIAIRKKEETHKMAEANRAFAHFR.

Belongs to the universal ribosomal protein uS7 family. Part of the 30S ribosomal subunit.

It localises to the plastid. It is found in the chloroplast. Functionally, one of the primary rRNA binding proteins, it binds directly to 16S rRNA where it nucleates assembly of the head domain of the 30S subunit. This chain is Small ribosomal subunit protein uS7c (rps7), found in Marchantia polymorpha (Common liverwort).